Reading from the N-terminus, the 83-residue chain is uncharacterized protein (83 aa).

This is an uncharacterized protein from Dictyostelium discoideum (Social amoeba).